The chain runs to 176 residues: Large ribosomal subunit protein uL6 (176 aa).

The protein belongs to the universal ribosomal protein uL6 family. As to quaternary structure, part of the 50S ribosomal subunit.

This protein binds to the 23S rRNA, and is important in its secondary structure. It is located near the subunit interface in the base of the L7/L12 stalk, and near the tRNA binding site of the peptidyltransferase center. The sequence is that of Large ribosomal subunit protein uL6 from Lactobacillus delbrueckii subsp. bulgaricus (strain ATCC 11842 / DSM 20081 / BCRC 10696 / JCM 1002 / NBRC 13953 / NCIMB 11778 / NCTC 12712 / WDCM 00102 / Lb 14).